The chain runs to 198 residues: Cyclin-dependent kinase inhibitor 1B (198 aa).

Residues 1–11 (MSNVRVSNGSP) are compositionally biased toward polar residues. The interval 1–34 (MSNVRVSNGSPSLERMDARQAEHPKPSACRNLFG) is disordered. Serine 10 carries the post-translational modification Phosphoserine; by UHMK1. Residues 14–25 (ERMDARQAEHPK) are compositionally biased toward basic and acidic residues. The tract at residues 51–91 (DMEEASQRKWNFDFQNHNPLEGRYQWQEVDKGSLPEFYYRP) is interaction with CDK2. A Phosphotyrosine; by SRC modification is found at tyrosine 74. The segment at 85 to 198 (PEFYYRPPRP…KKPGLRRHQT (114 aa)) is disordered. A Phosphotyrosine; by ABL, LYN and SRC modification is found at tyrosine 88. Tyrosine 89 bears the Phosphotyrosine mark. A compositionally biased stretch (polar residues) spans 104 to 124 (QESQDVSGSRQAVPSIGSQAY). Residues 153 to 169 (KRPAADDSSSQNKRANR) carry the Nuclear localization signal motif. Threonine 170 is modified (phosphothreonine). Over residues 175–186 (SDGSLNAGSVEQ) the composition is skewed to polar residues. Threonine 187 carries the post-translational modification Phosphothreonine; by PKB/AKT1, CDK1 and CDK2. Threonine 198 carries the phosphothreonine; by CaMK1, PKB/AKT1, RPS6KA1, RPS6KA3 and PIM1 modification.

Belongs to the CDI family. In terms of assembly, forms a ternary complex composed of CCNE1, CDK2 and CDKN1B. Interacts directly with CCNE1; the interaction is inhibited by CDK2-dependent phosphorylation on Thr-187. Interacts with COPS5, subunit of the COP9 signalosome complex; the interaction leads to CDKN1B degradation. Interacts with NUP50; the interaction leads to nuclear import and degradation of phosphorylated CDKN1B. Interacts with CCND1 and SNX6. Interacts (Thr-198-phosphorylated form) with 14-3-3 proteins, binds strongly YWHAQ, weakly YWHAE and YWHAH, but not YWHAB nor YWHAZ; the interaction with YWHAQ results in translocation to the cytoplasm. Interacts with AKT1 and LYN; the interactions lead to cytoplasmic mislocation, phosphorylation of CDKN1B and inhibition of cell cycle arrest. Forms a ternary complex with CCNA2 and CDK2; CDKN1B inhibits the kinase activity of CDK2 through conformational rearrangements. Interacts (unphosphorylated form) with CDK2. Forms a complex with CDK2 and SPDYA, but does not directly interact with SPDYA. Forms a ternary complex composed of cyclin D, CDK4 and CDKN1B. Interacts (phosphorylated on Tyr-88 and Tyr-89) with CDK4; the interaction is required for cyclin D and CDK4 complex assembly, induces nuclear translocation and activates the CDK4 kinase activity. Interacts with GRB2. Interacts with PIM1. Identified in a complex with SKP1, SKP2 and CKS1B. Interacts with UHMK1; the interaction leads to cytoplasmic mislocation, phosphorylation of CDKN1B and inhibition of cell cycle arrest. Also interacts with CDK1. Dephosphorylated on Thr-187 by PPM1H, leading to CDKN1B stability. In terms of processing, phosphorylated; phosphorylation occurs on serine, threonine and tyrosine residues. Phosphorylation on Ser-10 is the major site of phosphorylation in resting cells, takes place at the G(0)-G(1) phase and leads to protein stability. Phosphorylation on other sites is greatly enhanced by mitogens, growth factors, cMYC and in certain cancer cell lines. The phosphorylated form found in the cytoplasm is inactivate. Phosphorylation on Thr-198 is required for interaction with 14-3-3 proteins. Phosphorylation on Thr-187, by CDK1 and CDK2 leads to protein ubiquitination and proteasomal degradation. Tyrosine phosphorylation promotes this process. Phosphorylation by PKB/AKT1 can be suppressed by LY294002, an inhibitor of the catalytic subunit of PI3K. Phosphorylation on Tyr-88 and Tyr-89 has no effect on binding CDK2, but is required for binding CDK4. Dephosphorylated on tyrosine residues by G-CSF. Dephosphorylated on Thr-187 by PPM1H, leading to CDKN1B stability. Ubiquitinated; in the cytoplasm by the KPC complex (composed of RNF123/KPC1 and UBAC1/KPC2) and, in the nucleus, by SCF(SKP2). The latter requires prior phosphorylation on Thr-187. Ubiquitinated; by a TRIM21-containing SCF(SKP2)-like complex; leads to its degradation. Post-translationally, subject to degradation in the lysosome. Interaction with SNX6 promotes lysosomal degradation.

It localises to the nucleus. It is found in the cytoplasm. The protein resides in the endosome. Its function is as follows. Important regulator of cell cycle progression. Inhibits the kinase activity of CDK2 bound to cyclin A, but has little inhibitory activity on CDK2 bound to SPDYA. Involved in G1 arrest. Potent inhibitor of cyclin E- and cyclin A-CDK2 complexes. Forms a complex with cyclin type D-CDK4 complexes and is involved in the assembly, stability, and modulation of CCND1-CDK4 complex activation. Acts either as an inhibitor or an activator of cyclin type D-CDK4 complexes depending on its phosphorylation state and/or stoichometry. In Cricetulus griseus (Chinese hamster), this protein is Cyclin-dependent kinase inhibitor 1B (CDKN1B).